The primary structure comprises 872 residues: N-acetyltransferase eso1 (872 aa).

The tract at residues 1–591 (MELGKSKFSW…KQVKPKTYGR (591 aa)) is polymerase type-Y. The UmuC domain occupies 29–285 (VAHIDQDAFY…LKITDIRMLG (257 aa)). A UBZ3-type zinc finger spans residues 533–567 (SADETYTCEECEQKITLSERNEHEDYHIALSISRK). Cys540, Cys543, His555, and His559 together coordinate Zn(2+). The disordered stretch occupies residues 569 to 602 (RYNNLVPPSHDKPKQVKPKTYGRKTGSKHYAPLS). Positions 583 to 595 (QVKPKTYGRKTGS) are enriched in basic residues. Positions 592-872 (KTGSKHYAPL…KSLRYAVYES (281 aa)) are acetyltransferase. A CCHH-type zinc finger spans residues 653-677 (VTCSECSMEYNSTSEEDILLHSRFH).

This sequence in the C-terminal section; belongs to the acetyltransferase family. ECO subfamily. In the N-terminal section; belongs to the DNA polymerase type-Y family. In terms of assembly, interacts with pds5.

Its subcellular location is the nucleus. Its function is as follows. Probable acetyltransferase required for the establishment of sister chromatid cohesion and couple the processes of cohesion and DNA replication to ensure that only sister chromatids become paired together. In contrast to the structural cohesins, the deposition and establishment factors are required only during S phase. The relevance of acetyltransferase function remains unclear. The chain is N-acetyltransferase eso1 (eso1) from Schizosaccharomyces pombe (strain 972 / ATCC 24843) (Fission yeast).